The sequence spans 168 residues: 3-hydroxyacyl-[acyl-carrier-protein] dehydratase FabZ (168 aa).

Histidine 54 is a catalytic residue.

The protein belongs to the thioester dehydratase family. FabZ subfamily.

It is found in the cytoplasm. It carries out the reaction a (3R)-hydroxyacyl-[ACP] = a (2E)-enoyl-[ACP] + H2O. Functionally, involved in unsaturated fatty acids biosynthesis. Catalyzes the dehydration of short chain beta-hydroxyacyl-ACPs and long chain saturated and unsaturated beta-hydroxyacyl-ACPs. In Yersinia enterocolitica serotype O:8 / biotype 1B (strain NCTC 13174 / 8081), this protein is 3-hydroxyacyl-[acyl-carrier-protein] dehydratase FabZ.